The chain runs to 275 residues: tRNA pseudouridine synthase B (275 aa).

Asp-38 acts as the Nucleophile in catalysis.

This sequence belongs to the pseudouridine synthase TruB family. Type 1 subfamily.

It catalyses the reaction uridine(55) in tRNA = pseudouridine(55) in tRNA. Functionally, responsible for synthesis of pseudouridine from uracil-55 in the psi GC loop of transfer RNAs. The sequence is that of tRNA pseudouridine synthase B from Nitratiruptor sp. (strain SB155-2).